The following is a 458-amino-acid chain: UDP-N-acetylglucosamine 1-carboxyvinyltransferase (458 aa).

A phosphoenolpyruvate-binding site is contributed by 22-23 (KN). A UDP-N-acetyl-alpha-D-glucosamine-binding site is contributed by arginine 94. Aspartate 119 functions as the Proton donor in the catalytic mechanism. The UDP-N-acetyl-alpha-D-glucosamine site is built by aspartate 309 and valine 331.

It belongs to the EPSP synthase family. MurA subfamily.

The protein resides in the cytoplasm. The enzyme catalyses phosphoenolpyruvate + UDP-N-acetyl-alpha-D-glucosamine = UDP-N-acetyl-3-O-(1-carboxyvinyl)-alpha-D-glucosamine + phosphate. It functions in the pathway cell wall biogenesis; peptidoglycan biosynthesis. Functionally, cell wall formation. Adds enolpyruvyl to UDP-N-acetylglucosamine. The chain is UDP-N-acetylglucosamine 1-carboxyvinyltransferase from Chlamydia pneumoniae (Chlamydophila pneumoniae).